Reading from the N-terminus, the 496-residue chain is UDP-glycosyltransferase 84A2 (496 aa).

The active-site Proton acceptor is His23. Residue His23 coordinates an anthocyanidin. 6 residues coordinate UDP-alpha-D-glucose: Gln352, His367, Trp370, Asn371, Ser372, and Glu375. Gly390 serves as a coordination point for an anthocyanidin. 2 residues coordinate UDP-alpha-D-glucose: Asp391 and Gln392.

It belongs to the UDP-glycosyltransferase family. Expressed in roots, cotyledons, leaf veins and trichomes.

The catalysed reaction is (E)-sinapate + UDP-alpha-D-glucose = 1-O-(trans-sinapoyl)-beta-D-glucose + UDP. Functionally, sinapate glucosyltransferase (SGT) required for the biosynthesis of the glucose ester sinapoylglucose and subsequently sinapoylmalate and sinapoylcholine. Is the major SGT activity in plant. Plays an important role in sinapoylation of anthocyanins. Sinapoylglucose produced by UGT84A2 is a significant source of sinapoyl moieties for anthocyanins. Indole-3-butyric acid (IBA)-specific glucosyltransferase that catalyzes the glucosylation of the auxin IBA, but not indole-3-acetic acid (IAA). May be involved in flowering regulation through IBA-mediated transcriptional repression of the auxin-response factors ARF6 and ARF8 and downstream flowering pathway genes. Can glucosylate the phytotoxic xenobiotic compound 2,4,5-trichlorophenol (TCP). This chain is UDP-glycosyltransferase 84A2, found in Arabidopsis thaliana (Mouse-ear cress).